A 526-amino-acid polypeptide reads, in one-letter code: Rho guanine nucleotide exchange factor 3 (526 aa).

The segment at 20-40 is disordered; sequence ELPPASGPAKDAEEPSNKRVK. Phosphoserine occurs at positions 47 and 70. Positions 122-304 constitute a DH domain; the sequence is KRQEAIFELS…QGIVAEINTK (183 aa). The PH domain maps to 291–449; it reads INIIQGIVAE…WLNCIRQAKE (159 aa). Disordered stretches follow at residues 464–502 and 507–526; these read EGSF…TSEV and EHME…ESNV. Residues 466–475 are compositionally biased toward polar residues; that stretch reads SFLNPTTGSR.

As to quaternary structure, interacts with RHOA and RHOB.

The protein localises to the cytoplasm. Functionally, acts as a guanine nucleotide exchange factor (GEF) for RhoA and RhoB GTPases. The chain is Rho guanine nucleotide exchange factor 3 (ARHGEF3) from Macaca fascicularis (Crab-eating macaque).